Here is a 572-residue protein sequence, read N- to C-terminus: 2-succinyl-5-enolpyruvyl-6-hydroxy-3-cyclohexene-1-carboxylate synthase (572 aa).

This sequence belongs to the TPP enzyme family. MenD subfamily. In terms of assembly, homodimer. Mg(2+) serves as cofactor. Requires Mn(2+) as cofactor. It depends on thiamine diphosphate as a cofactor.

The catalysed reaction is isochorismate + 2-oxoglutarate + H(+) = 5-enolpyruvoyl-6-hydroxy-2-succinyl-cyclohex-3-ene-1-carboxylate + CO2. It participates in quinol/quinone metabolism; 1,4-dihydroxy-2-naphthoate biosynthesis; 1,4-dihydroxy-2-naphthoate from chorismate: step 2/7. It functions in the pathway quinol/quinone metabolism; menaquinone biosynthesis. In terms of biological role, catalyzes the thiamine diphosphate-dependent decarboxylation of 2-oxoglutarate and the subsequent addition of the resulting succinic semialdehyde-thiamine pyrophosphate anion to isochorismate to yield 2-succinyl-5-enolpyruvyl-6-hydroxy-3-cyclohexene-1-carboxylate (SEPHCHC). In Aeromonas salmonicida (strain A449), this protein is 2-succinyl-5-enolpyruvyl-6-hydroxy-3-cyclohexene-1-carboxylate synthase.